Consider the following 370-residue polypeptide: Propane 2-monooxygenase, reductase component (370 aa).

Residues 1-14 (MAPRPLRRHPPLHH) are compositionally biased toward basic residues. Residues 1 to 21 (MAPRPLRRHPPLHHSFHESRR) are disordered. One can recognise a 2Fe-2S ferredoxin-type domain in the interval 28–118 (HRINFEPVDI…DCTIELLNFD (91 aa)). [2Fe-2S] cluster contacts are provided by cysteine 62, cysteine 67, cysteine 70, and cysteine 102. The FAD-binding FR-type domain occupies 128-229 (IQDVRTRVTR…TGPYGSFTIK (102 aa)).

Belongs to the TmoA/XamoA family. In terms of assembly, the propane 2-monooxygenase multicomponent enzyme system is composed of an electron transfer component and a monooxygenase component interacting with the effector protein PrmD. The electron transfer component is composed of a reductase (PrmB), and the monooxygenase component is formed by a large subunit (PrmA) and a small subunit (PrmC). Requires FAD as cofactor. The cofactor is [2Fe-2S] cluster.

Functionally, reductase component of the propane 2-monooxygenase multicomponent enzyme system which is involved in the degradation of propane via the O2-dependent hydroxylation of propane. Reductase catalyzes the transfer of electrons from NADH or NADPH to monooxygenase. The polypeptide is Propane 2-monooxygenase, reductase component (Rhodococcus jostii (strain RHA1)).